Reading from the N-terminus, the 492-residue chain is E1B 55 kDa protein (492 aa).

Residues 22–112 (ENMEGSQDED…ERNPSGNNSR (91 aa)) are disordered. Over residues 34–44 (RLLASAASGSS) the composition is skewed to low complexity. Residues serine 486 and serine 487 each carry the phosphoserine modification. Threonine 491 is subject to Phosphothreonine.

Belongs to the adenoviridae E1B 55 kDa protein family. In terms of assembly, interacts with host PML-4 and PML-5; this interaction promotes efficient subnuclear targeting of E1B-55K to PML nuclear bodies. Interacts with E4-ORF3 protein. Interacts with E4-ORF6 protein.

The protein localises to the host nucleus. Its subcellular location is the host cytoplasm. Plays a major role to prevent cellular inhibition of viral genome replication. Assembles an SCF-like E3 ubiquitin ligase complex based on the cellular proteins ELOB, ELOC, CUL5 and RBX1, in cooperation with viral E4orf6. This viral RING-type ligase ubiquitinates cellular substrates and targets them to proteasomal degradation: TP53/p53, LIG4, MRE11-RAD50-NBS1 (MRN) complex, ITGA3, DAXX and BLM. E1B-55K probably acts as the substrate-specific adapter of the SCF-like E3 ubiquitin ligase complex. Degradation of host TP53/p53 activity is essential for preventing E1A-induced TP53 accumulation that would otherwise lead to cell apoptosis and growth arrest. E1B-55K also inactivates TP53 transcription-factor activity by binding its transactivation domain. E1B-55K also functions as a SUMO1 E3 ligase for TP53 which causes the latter to be sequestered in promyelocytic leukemia (PML) nuclear bodies thereby contributing to maximal inhibition of TP53 function. In Human adenovirus B serotype 7 (HAdV-7), this protein is E1B 55 kDa protein.